We begin with the raw amino-acid sequence, 65 residues long: Large ribosomal subunit protein bL35 (65 aa).

Basic residues predominate over residues Met1 to Arg15. A disordered region spans residues Met1 to Asn28.

The protein belongs to the bacterial ribosomal protein bL35 family.

The protein is Large ribosomal subunit protein bL35 of Cyanothece sp. (strain PCC 7425 / ATCC 29141).